The chain runs to 525 residues: uncharacterized protein (525 aa).

The next 6 membrane-spanning stretches (helical) occupy residues phenylalanine 7–isoleucine 29, leucine 34–leucine 51, glycine 64–phenylalanine 82, leucine 92–phenylalanine 114, valine 121–glycine 143, and leucine 148–alanine 170. RCK C-terminal domains lie at lysine 178–valine 257 and glutamate 259–aspartate 341. 5 helical membrane-spanning segments follow: residues alanine 351–alanine 370, glycine 374–histidine 396, leucine 416–valine 438, leucine 443–tryptophan 465, and serine 502–leucine 524.

This sequence belongs to the AAE transporter (TC 2.A.81) family.

The protein resides in the cell membrane. This is an uncharacterized protein from Cutibacterium acnes (strain DSM 16379 / KPA171202) (Propionibacterium acnes).